An 852-amino-acid polypeptide reads, in one-letter code: DNA mismatch repair protein MutS (852 aa).

Position 602-609 (G602–S609) interacts with ATP.

Belongs to the DNA mismatch repair MutS family.

In terms of biological role, this protein is involved in the repair of mismatches in DNA. It is possible that it carries out the mismatch recognition step. This protein has a weak ATPase activity. The protein is DNA mismatch repair protein MutS of Streptococcus thermophilus (strain ATCC BAA-491 / LMD-9).